A 327-amino-acid polypeptide reads, in one-letter code: Vacuolar protein sorting-associated protein 26A (327 aa).

Residues 306 to 327 (RTNFHQRFESPESQASAEQPEM) form a disordered region. Serine 315 is subject to Phosphoserine. Polar residues predominate over residues 316–327 (PESQASAEQPEM).

It belongs to the VPS26 family. Component of the heterotrimeric retromer cargo-selective complex (CSC), also described as vacuolar protein sorting subcomplex (VPS), formed by VPS26 (VPS26A or VPS26B), VPS29 and VPS35. The CSC has a highly elongated structure with VPS26 and VPS29 binding independently at opposite distal ends of VPS35 as central platform. The CSC is believed to associate with variable sorting nexins to form functionally distinct retromer complex variants. The originally described retromer complex (also called SNX-BAR retromer) is a pentamer containing the CSC and a heterodimeric membrane-deforming subcomplex formed between SNX1 or SNX2 and SNX5 or SNX6 (also called SNX-BAR subcomplex); the respective CSC and SNX-BAR subcomplexes associate with low affinity. The CSC associates with SNX3 to form a SNX3-retromer complex. The CSC associates with SNX27, the WASH complex and the SNX-BAR subcomplex to form the SNX27-retromer complex. Interacts with VPS29, VPS35, SNX1, SNX2, SNX5, SNX6, SNX3, SNX27, RAB7A, ECPAS, EHD1, WASHC5, SORL1.

The protein resides in the cytoplasm. It is found in the endosome membrane. Its subcellular location is the early endosome. Its function is as follows. Acts as a component of the retromer cargo-selective complex (CSC). The CSC is believed to be the core functional component of retromer or respective retromer complex variants acting to prevent missorting of selected transmembrane cargo proteins into the lysosomal degradation pathway. The recruitment of the CSC to the endosomal membrane involves RAB7A and SNX3. The SNX-BAR retromer mediates retrograde transport of cargo proteins from endosomes to the trans-Golgi network (TGN) and is involved in endosome-to-plasma membrane transport for cargo protein recycling. The SNX3-retromer mediates the retrograde endosome-to-TGN transport of WLS distinct from the SNX-BAR retromer pathway. The SNX27-retromer is believed to be involved in endosome-to-plasma membrane trafficking and recycling of a broad spectrum of cargo proteins. The CSC seems to act as recruitment hub for other proteins, such as the WASH complex and TBC1D5. Required for retrograde transport of lysosomal enzyme receptor IGF2R. Required to regulate transcytosis of the polymeric immunoglobulin receptor (pIgR-pIgA). Required for the endosomal localization of WASHC2A (indicative for the WASH complex). Required for the endosomal localization of TBC1D5. Mediates retromer cargo recognition of SORL1 and is involved in trafficking of SORL1 implicated in sorting and processing of APP. Involved in retromer-independent lysosomal sorting of F2R. Involved in recycling of ADRB2. Enhances the affinity of SNX27 for PDZ-binding motifs in cargo proteins. In Homo sapiens (Human), this protein is Vacuolar protein sorting-associated protein 26A.